The following is a 486-amino-acid chain: Pentatricopeptide repeat-containing protein At3g06430, chloroplastic (486 aa).

Residues 1–36 constitute a chloroplast transit peptide; it reads MASMSLSFSSSLCSSRIPEGKRRFRHRDVGIVRCVL. 10 PPR repeats span residues 123-157, 158-188, 194-228, 229-264, 265-299, 300-334, 335-369, 370-404, 405-439, and 440-470; these read KEGT…GLEP, TVEL…MKSF, DVFT…LITP, NTVT…ACKP, DVWT…GIEP, ETRT…EFPW, TTST…GMKA, DTKT…EIPE, NTAF…QCVC, and DSRT…RQKL.

Belongs to the PPR family. P subfamily.

It is found in the plastid. It localises to the chloroplast. The chain is Pentatricopeptide repeat-containing protein At3g06430, chloroplastic (EMB2750) from Arabidopsis thaliana (Mouse-ear cress).